A 66-amino-acid chain; its full sequence is Small ribosomal subunit protein bS21 (66 aa).

This sequence belongs to the bacterial ribosomal protein bS21 family.

This Bdellovibrio bacteriovorus (strain ATCC 15356 / DSM 50701 / NCIMB 9529 / HD100) protein is Small ribosomal subunit protein bS21.